The sequence spans 206 residues: Outer-membrane lipoprotein carrier protein (206 aa).

The signal sequence occupies residues 1 to 23; the sequence is MKPLFPMLTAAAIAAGLAAPAQA.

It belongs to the LolA family. In terms of assembly, monomer.

The protein resides in the periplasm. Functionally, participates in the translocation of lipoproteins from the inner membrane to the outer membrane. Only forms a complex with a lipoprotein if the residue after the N-terminal Cys is not an aspartate (The Asp acts as a targeting signal to indicate that the lipoprotein should stay in the inner membrane). This is Outer-membrane lipoprotein carrier protein from Chromobacterium violaceum (strain ATCC 12472 / DSM 30191 / JCM 1249 / CCUG 213 / NBRC 12614 / NCIMB 9131 / NCTC 9757 / MK).